The primary structure comprises 117 residues: Ribosome-binding factor A (117 aa).

Belongs to the RbfA family. In terms of assembly, monomer. Binds 30S ribosomal subunits, but not 50S ribosomal subunits or 70S ribosomes.

The protein resides in the cytoplasm. Functionally, one of several proteins that assist in the late maturation steps of the functional core of the 30S ribosomal subunit. Associates with free 30S ribosomal subunits (but not with 30S subunits that are part of 70S ribosomes or polysomes). Required for efficient processing of 16S rRNA. May interact with the 5'-terminal helix region of 16S rRNA. The sequence is that of Ribosome-binding factor A from Leptospira borgpetersenii serovar Hardjo-bovis (strain JB197).